We begin with the raw amino-acid sequence, 652 residues long: DNA ligase (652 aa).

NAD(+) contacts are provided by residues 29-33 (DSEYD), 78-79 (SL), and Glu-107. The active-site N6-AMP-lysine intermediate is Lys-109. NAD(+)-binding residues include Arg-130, Glu-164, Lys-278, and Lys-302. Residues Cys-395, Cys-398, Cys-413, and Cys-418 each contribute to the Zn(2+) site. In terms of domain architecture, BRCT spans 577 to 652 (VADAALSGLT…VRDEAWLESL (76 aa)).

The protein belongs to the NAD-dependent DNA ligase family. LigA subfamily. Mg(2+) is required as a cofactor. Mn(2+) serves as cofactor.

The catalysed reaction is NAD(+) + (deoxyribonucleotide)n-3'-hydroxyl + 5'-phospho-(deoxyribonucleotide)m = (deoxyribonucleotide)n+m + AMP + beta-nicotinamide D-nucleotide.. Functionally, DNA ligase that catalyzes the formation of phosphodiester linkages between 5'-phosphoryl and 3'-hydroxyl groups in double-stranded DNA using NAD as a coenzyme and as the energy source for the reaction. It is essential for DNA replication and repair of damaged DNA. The protein is DNA ligase of Streptococcus pneumoniae serotype 4 (strain ATCC BAA-334 / TIGR4).